Reading from the N-terminus, the 184-residue chain is Large ribosomal subunit protein uL6 (184 aa).

It belongs to the universal ribosomal protein uL6 family. Part of the 50S ribosomal subunit.

This protein binds to the 23S rRNA, and is important in its secondary structure. It is located near the subunit interface in the base of the L7/L12 stalk, and near the tRNA binding site of the peptidyltransferase center. This Salinibacter ruber (strain DSM 13855 / M31) protein is Large ribosomal subunit protein uL6.